We begin with the raw amino-acid sequence, 262 residues long: Transmembrane protein 270 (262 aa).

5 consecutive transmembrane segments (helical) span residues 6–26 (LVRS…ALLI), 30–50 (AHLY…LLGL), 67–87 (PVGR…CLAL), 92–112 (LVWA…KWLG), and 127–147 (LFLS…LLVW). Residues 226-262 (QEAEPQKALGLSSETPPPGPPAPGARPVLPEPGTPGE) are disordered. The span at 240–262 (TPPPGPPAPGARPVLPEPGTPGE) shows a compositional bias: pro residues.

It localises to the membrane. This Bos taurus (Bovine) protein is Transmembrane protein 270.